The sequence spans 118 residues: Protein yippee-like 1 (118 aa).

Positions 19 to 116 constitute a Yippee domain; the sequence is RTYSCIHCRA…IELAHMIKDN (98 aa). C23, C26, C79, and C82 together coordinate Zn(2+). The Nuclear localization signal signature appears at 99–104; that stretch reads KYKEGK.

The protein belongs to the yippee family.

The protein resides in the nucleus. Its function is as follows. May play a role in epithelioid conversion of fibroblasts. The protein is Protein yippee-like 1 (Ypel1) of Mus musculus (Mouse).